A 494-amino-acid polypeptide reads, in one-letter code: 4-trimethylaminobutyraldehyde dehydrogenase (494 aa).

An N-acetylserine modification is found at Ser-2. At Lys-30 the chain carries N6-acetyllysine; alternate. N6-succinyllysine; alternate is present on Lys-30. Lys-59 carries the N6-succinyllysine modification. Residues Lys-180 and 232–236 (GSVPT) each bind NAD(+). The active-site Proton acceptor is Glu-254. The Nucleophile role is filled by Cys-288. Lys-298 bears the N6-acetyllysine mark. Glu-391 is a binding site for NAD(+).

This sequence belongs to the aldehyde dehydrogenase family. In terms of assembly, homotetramer. As to expression, detected in lever (at protein level).

The protein resides in the cytoplasm. It localises to the cytosol. The catalysed reaction is 4-(trimethylamino)butanal + NAD(+) + H2O = 4-(trimethylamino)butanoate + NADH + 2 H(+). It carries out the reaction an aldehyde + NAD(+) + H2O = a carboxylate + NADH + 2 H(+). The enzyme catalyses 4-aminobutanal + NAD(+) + H2O = 4-aminobutanoate + NADH + 2 H(+). It catalyses the reaction formaldehyde + NAD(+) + H2O = formate + NADH + 2 H(+). The catalysed reaction is acetaldehyde + NAD(+) + H2O = acetate + NADH + 2 H(+). It carries out the reaction imidazole-4-acetaldehyde + NAD(+) + H2O = imidazole-4-acetate + NADH + 2 H(+). The enzyme catalyses acrolein + NAD(+) + H2O = acrylate + NADH + 2 H(+). It catalyses the reaction (5-hydroxyindol-3-yl)acetaldehyde + NAD(+) + H2O = (5-hydroxyindol-3-yl)acetate + NADH + 2 H(+). The catalysed reaction is 3,4-dihydroxyphenylacetaldehyde + NAD(+) + H2O = 3,4-dihydroxyphenylacetate + NADH + 2 H(+). It carries out the reaction spermine monoaldehyde + NAD(+) + H2O = N-(2-carboxyethyl)spermidine + NADH + 2 H(+). The enzyme catalyses propanal + NAD(+) + H2O = propanoate + NADH + 2 H(+). It catalyses the reaction butanal + NAD(+) + H2O = butanoate + NADH + 2 H(+). The catalysed reaction is pentanal + NAD(+) + H2O = pentanoate + NADH + 2 H(+). It carries out the reaction hexanal + NAD(+) + H2O = hexanoate + NADH + 2 H(+). It functions in the pathway amine and polyamine biosynthesis; carnitine biosynthesis. Functionally, converts gamma-trimethylaminobutyraldehyde into gamma-butyrobetaine with high efficiency (in vitro). Can catalyze the irreversible oxidation of a broad range of aldehydes to the corresponding acids in an NAD-dependent reaction, but with low efficiency. Catalyzes the oxidation of aldehydes arising from biogenic amines and polyamines. The sequence is that of 4-trimethylaminobutyraldehyde dehydrogenase (Aldh9a1) from Rattus norvegicus (Rat).